Here is a 233-residue protein sequence, read N- to C-terminus: Bcl-2-like protein 1 (233 aa).

The BH4 signature appears at 4–24 (SNRELVVDFLSYKLSQKGYSW). A disordered region spans residues 29–71 (DVEENRTEAPEGTESEAETPSAINGNPSWHLADSPAVNGATGH). Ser-49 bears the Phosphoserine; by PLK3 mark. Residue Ser-62 is modified to Phosphoserine; by CDK1. Positions 86–100 (VKQALREAGDEFELR) match the BH3 motif. The BH1 signature appears at 129–148 (ELFRDGVNWGRIVAFFSFGG). The BH2 motif lies at 180-195 (PWIQENGGWDTFVELY). The chain crosses the membrane as a helical span at residues 210 to 226 (FNRWFLTGMTLAGVVLL).

It belongs to the Bcl-2 family. As to quaternary structure, homodimer. Heterodimers with BAX, BAK or BCL2. Heterodimerization with BAX does not seem to be required for anti-apoptotic activity. Interacts with BCL2L11. Interacts with BAD. Interacts with SIVA1 isoform 1; the interaction inhibits the anti-apoptotic activity. Interacts with BECN1 and PGAM5. Interacts with IKZF3. Interacts with HEBP2. Interacts with BOP. Interacts with p53/TP53 and BBC3; interaction with BBC3 disrupts the interaction with p53/TP53. Interacts with DNM1L and CLTA; DNM1L and BCL2L1 may form a complex in synaptic vesicles that also contains clathrin and MFF. Interacts with ATP5F1A and ATP5F1B; the interactions mediate the association of BCL2L1 with the mitochondrial membrane ATP synthase F(1)F(0) ATP synthase. Interacts with VDAC1. Interacts (via the loop between motifs BH4 and BH3) with NLRP1 (via LRR repeats), but not with NLRP2, NLRP3, NLRP4, PYCARD, nor MEFV. Interacts with BCL2L11 (via BH3). Interacts with RNF183. Interacts with GIMAP3/IAN4. Interacts with GIMAP5 and HSPA8/HSC70; the interaction between HSPA8 and BCL2L1 is impaired in the absence of GIMAP5. Interacts with CLU (isoform 4); this interaction releases and activates BAX and promotes cell death. In terms of processing, proteolytically cleaved by caspases during apoptosis. The cleaved protein, lacking the BH4 motif, has pro-apoptotic activity. Phosphorylated on Ser-62 by CDK1. This phosphorylation is partial in normal mitotic cells, but complete in G2-arrested cells upon DNA-damage, thus promoting subsequent apoptosis probably by triggering caspases-mediated proteolysis. Phosphorylated by PLK3, leading to regulate the G2 checkpoint and progression to cytokinesis during mitosis. Phosphorylation at Ser-49 appears during the S phase and G2, disappears rapidly in early mitosis during prometaphase, metaphase and early anaphase, and re-appears during telophase and cytokinesis. Post-translationally, ubiquitinated by RNF183 during prolonged ER stress, leading to degradation by the proteosome.

It localises to the mitochondrion membrane. The protein localises to the nucleus membrane. Its subcellular location is the mitochondrion matrix. It is found in the cytoplasm. The protein resides in the cytoskeleton. It localises to the microtubule organizing center. The protein localises to the centrosome. Its subcellular location is the cytosol. It is found in the cytoplasmic vesicle. The protein resides in the secretory vesicle. It localises to the synaptic vesicle membrane. In terms of biological role, potent inhibitor of cell death. Inhibits activation of caspases. Appears to regulate cell death by blocking the voltage-dependent anion channel (VDAC) by binding to it and preventing the release of the caspase activator, CYC1, from the mitochondrial membrane. Also acts as a regulator of G2 checkpoint and progression to cytokinesis during mitosis. Regulates presynaptic plasticity, including neurotransmitter release and recovery, number of axonal mitochondria as well as size and number of synaptic vesicle clusters. During synaptic stimulation, increases ATP availability from mitochondria through regulation of mitochondrial membrane ATP synthase F(1)F(0) activity and regulates endocytic vesicle retrieval in hippocampal neurons through association with DMN1L and stimulation of its GTPase activity in synaptic vesicles. May attenuate inflammation impairing NLRP1-inflammasome activation, hence CASP1 activation and IL1B release. This chain is Bcl-2-like protein 1 (BCL2L1), found in Sus scrofa (Pig).